We begin with the raw amino-acid sequence, 304 residues long: tRNA pseudouridine synthase B (304 aa).

Catalysis depends on aspartate 41, which acts as the Nucleophile.

It belongs to the pseudouridine synthase TruB family. Type 1 subfamily.

The catalysed reaction is uridine(55) in tRNA = pseudouridine(55) in tRNA. Its function is as follows. Responsible for synthesis of pseudouridine from uracil-55 in the psi GC loop of transfer RNAs. This is tRNA pseudouridine synthase B from Nitratidesulfovibrio vulgaris (strain ATCC 29579 / DSM 644 / CCUG 34227 / NCIMB 8303 / VKM B-1760 / Hildenborough) (Desulfovibrio vulgaris).